Reading from the N-terminus, the 435-residue chain is Serine--tRNA ligase (435 aa).

242 to 244 (TAE) is a binding site for L-serine. Position 273–275 (273–275 (RSE)) interacts with ATP. Glu-296 serves as a coordination point for L-serine. Residue 360–363 (EISS) coordinates ATP. Ser-396 lines the L-serine pocket.

The protein belongs to the class-II aminoacyl-tRNA synthetase family. Type-1 seryl-tRNA synthetase subfamily. Homodimer. The tRNA molecule binds across the dimer.

The protein resides in the cytoplasm. The enzyme catalyses tRNA(Ser) + L-serine + ATP = L-seryl-tRNA(Ser) + AMP + diphosphate + H(+). The catalysed reaction is tRNA(Sec) + L-serine + ATP = L-seryl-tRNA(Sec) + AMP + diphosphate + H(+). The protein operates within aminoacyl-tRNA biosynthesis; selenocysteinyl-tRNA(Sec) biosynthesis; L-seryl-tRNA(Sec) from L-serine and tRNA(Sec): step 1/1. Catalyzes the attachment of serine to tRNA(Ser). Is also able to aminoacylate tRNA(Sec) with serine, to form the misacylated tRNA L-seryl-tRNA(Sec), which will be further converted into selenocysteinyl-tRNA(Sec). This chain is Serine--tRNA ligase, found in Vibrio parahaemolyticus serotype O3:K6 (strain RIMD 2210633).